The sequence spans 76 residues: MFTLKKSMLLLFFLGTISLSLCEEERNADEDDGEKEVKRGIFALIKTAAKFVGKNLLKQAGKAGLEHLACKANNQC.

The first 22 residues, 1-22, serve as a signal peptide directing secretion; it reads MFTLKKSMLLLFFLGTISLSLC. Positions 23-39 are excised as a propeptide; sequence EEERNADEDDGEKEVKR. Cysteine 70 and cysteine 76 are joined by a disulfide.

As to expression, expressed by the skin glands.

The protein localises to the secreted. Its function is as follows. Antimicrobial peptide with activity against Gram-positive and Gram-negative bacteria and against fungi. Has been tested against S.aureus (MIC=2.5 ug/mL), B.pumilus (MIC=2.5 ug/mL), B.cereus (MIC=7.5 ug/mL), E.coli (MIC=12.5 ug/mL), B.dysenteriae (MIC=7.5 ug/mL), A.cacoaceticus (MIC=25.0 ug/mL), P.aeruginosa (MIC=50.0 ug/mL) and C.albicans (MIC=2.5 ug/mL). Also shows a weak hemolytic activity. In Amolops loloensis (Lolokou Sucker Frog), this protein is Esculentin-2-ALa.